The primary structure comprises 490 residues: Betaine aldehyde dehydrogenase (490 aa).

The K(+) site is built by threonine 26 and aspartate 93. 150–152 lines the NAD(+) pocket; that stretch reads GAW. Lysine 162 (charge relay system) is an active-site residue. Position 176–179 (176–179) interacts with NAD(+); the sequence is KPSE. Valine 180 is a K(+) binding site. 230–233 contributes to the NAD(+) binding site; sequence GVAT. Residue leucine 246 participates in K(+) binding. Glutamate 252 functions as the Proton acceptor in the catalytic mechanism. Positions 254, 286, and 387 each coordinate NAD(+). Catalysis depends on cysteine 286, which acts as the Nucleophile. Position 286 is a cysteine sulfenic acid (-SOH) (cysteine 286). K(+) contacts are provided by lysine 457 and glycine 460. Residue glutamate 464 is the Charge relay system of the active site.

It belongs to the aldehyde dehydrogenase family. In terms of assembly, dimer of dimers. Requires K(+) as cofactor.

It catalyses the reaction betaine aldehyde + NAD(+) + H2O = glycine betaine + NADH + 2 H(+). The protein operates within amine and polyamine biosynthesis; betaine biosynthesis via choline pathway; betaine from betaine aldehyde: step 1/1. Functionally, involved in the biosynthesis of the osmoprotectant glycine betaine. Catalyzes the irreversible oxidation of betaine aldehyde to the corresponding acid. In Stenotrophomonas maltophilia (strain K279a), this protein is Betaine aldehyde dehydrogenase.